Consider the following 206-residue polypeptide: UPF0328 protein ECU01_0050/ECU01_1560 (206 aa).

Disordered stretches follow at residues methionine 1 to threonine 153 and glycine 179 to leucine 206. The segment covering histidine 74–serine 96 has biased composition (basic and acidic residues). Composition is skewed to polar residues over residues proline 97 to threonine 120 and serine 132 to histidine 148.

This sequence belongs to the UPF0328 family.

In Encephalitozoon cuniculi (strain GB-M1) (Microsporidian parasite), this protein is UPF0328 protein ECU01_0050/ECU01_1560.